A 380-amino-acid chain; its full sequence is Maintenance of mitochondrial morphology protein 1 (380 aa).

Residues 1–64 (MQGRAIWAEG…IVPSLSFIQG (64 aa)) are Lumenal-facing. A helical membrane pass occupies residues 65-85 (FMAGQAVLLMLFLGLFRYFFM). The Cytoplasmic portion of the chain corresponds to 86-380 (TSSPGTRAQQ…IGTSPADPLA (295 aa)). In terms of domain architecture, SMP-LTD spans 147–369 (APESLDWLNV…WPHFWHIPLP (223 aa)).

The protein belongs to the MMM1 family. In terms of assembly, homodimer. Component of the ER-mitochondria encounter structure (ERMES) or MDM complex, composed of MMM1, MDM10, MDM12 and MDM34. An MMM1 homodimer associates with one molecule of MDM12 on each side in a pairwise head-to-tail manner, and the SMP-LTD domains of MMM1 and MDM12 generate a continuous hydrophobic tunnel for phospholipid trafficking.

It is found in the endoplasmic reticulum membrane. In terms of biological role, component of the ERMES/MDM complex, which serves as a molecular tether to connect the endoplasmic reticulum (ER) and mitochondria. Components of this complex are involved in the control of mitochondrial shape and protein biogenesis, and function in nonvesicular lipid trafficking between the ER and mitochondria. The MDM12-MMM1 subcomplex functions in the major beta-barrel assembly pathway that is responsible for biogenesis of all outer membrane beta-barrel proteins, and acts in a late step after the SAM complex. The MDM10-MDM12-MMM1 subcomplex further acts in the TOM40-specific pathway after the action of the MDM12-MMM1 complex. Essential for establishing and maintaining the structure of mitochondria and maintenance of mtDNA nucleoids. The sequence is that of Maintenance of mitochondrial morphology protein 1 from Malassezia globosa (strain ATCC MYA-4612 / CBS 7966) (Dandruff-associated fungus).